The following is a 167-amino-acid chain: Small ribosomal subunit protein uS5 (167 aa).

The S5 DRBM domain maps to 12–75; it reads IEDRVVAINR…ETARKSLIEV (64 aa).

This sequence belongs to the universal ribosomal protein uS5 family. As to quaternary structure, part of the 30S ribosomal subunit. Contacts proteins S4 and S8.

Functionally, with S4 and S12 plays an important role in translational accuracy. Its function is as follows. Located at the back of the 30S subunit body where it stabilizes the conformation of the head with respect to the body. In Pediococcus pentosaceus (strain ATCC 25745 / CCUG 21536 / LMG 10740 / 183-1w), this protein is Small ribosomal subunit protein uS5.